The chain runs to 229 residues: Cytochrome c oxidase subunit 2 (229 aa).

At 1-26 (MSTWANLGLQDSASPLMEQLIFFHDH) the chain is on the mitochondrial intermembrane side. Residues 27 to 48 (ALLILVMITILVGYLMFMLFFN) form a helical membrane-spanning segment. Over 49-62 (SYINRFLLHGQLIE) the chain is Mitochondrial matrix. A helical membrane pass occupies residues 63–82 (MIWTILPAIILLFIAMPSLR). Topologically, residues 83–229 (LLYLLDEINE…IKWIASKVNS (147 aa)) are mitochondrial intermembrane. Residues histidine 161, cysteine 196, glutamate 198, cysteine 200, histidine 204, and methionine 207 each coordinate Cu cation. Glutamate 198 serves as a coordination point for Mg(2+).

It belongs to the cytochrome c oxidase subunit 2 family. Component of the cytochrome c oxidase (complex IV, CIV), a multisubunit enzyme composed of a catalytic core of 3 subunits and several supernumerary subunits. The complex exists as a monomer or a dimer and forms supercomplexes (SCs) in the inner mitochondrial membrane with ubiquinol-cytochrome c oxidoreductase (cytochrome b-c1 complex, complex III, CIII). It depends on Cu cation as a cofactor.

The protein resides in the mitochondrion inner membrane. It carries out the reaction 4 Fe(II)-[cytochrome c] + O2 + 8 H(+)(in) = 4 Fe(III)-[cytochrome c] + 2 H2O + 4 H(+)(out). Its function is as follows. Component of the cytochrome c oxidase, the last enzyme in the mitochondrial electron transport chain which drives oxidative phosphorylation. The respiratory chain contains 3 multisubunit complexes succinate dehydrogenase (complex II, CII), ubiquinol-cytochrome c oxidoreductase (cytochrome b-c1 complex, complex III, CIII) and cytochrome c oxidase (complex IV, CIV), that cooperate to transfer electrons derived from NADH and succinate to molecular oxygen, creating an electrochemical gradient over the inner membrane that drives transmembrane transport and the ATP synthase. Cytochrome c oxidase is the component of the respiratory chain that catalyzes the reduction of oxygen to water. Electrons originating from reduced cytochrome c in the intermembrane space (IMS) are transferred via the dinuclear copper A center (CU(A)) of subunit 2 and heme A of subunit 1 to the active site in subunit 1, a binuclear center (BNC) formed by heme A3 and copper B (CU(B)). The BNC reduces molecular oxygen to 2 water molecules using 4 electrons from cytochrome c in the IMS and 4 protons from the mitochondrial matrix. The chain is Cytochrome c oxidase subunit 2 (mt:CoII) from Drosophila bifasciata (Fruit fly).